A 292-amino-acid chain; its full sequence is 5,10-methylenetetrahydrofolate reductase (292 aa).

The active-site Proton donor/acceptor is the Glu26. Residue Thr57 coordinates NADH. The FAD site is built by Tyr58, Ala60, His86, Arg116, Gly117, Asp118, Ala130, Tyr150, His154, Ala157, Asp163, Asn166, Arg169, and Lys170. Asp118 serves as a coordination point for (6S)-5-methyl-5,6,7,8-tetrahydrofolate. Gln181 lines the NADH pocket. The (6S)-5-methyl-5,6,7,8-tetrahydrofolate site is built by Gln181, Gln217, and Arg277.

The protein belongs to the methylenetetrahydrofolate reductase family. FAD serves as cofactor.

The enzyme catalyses (6S)-5-methyl-5,6,7,8-tetrahydrofolate + NAD(+) = (6R)-5,10-methylene-5,6,7,8-tetrahydrofolate + NADH + H(+). The protein operates within one-carbon metabolism; tetrahydrofolate interconversion. It functions in the pathway amino-acid biosynthesis; L-methionine biosynthesis via de novo pathway. Catalyzes the NADH-dependent reduction of 5,10-methylenetetrahydrofolate to 5-methyltetrahydrofolate. Is required to provide the methyl group necessary for methionine synthetase to convert homocysteine to methionine; the methyl group is given by 5-methyltetrahydrofolate. The protein is 5,10-methylenetetrahydrofolate reductase (metF) of Neisseria meningitidis serogroup B (strain ATCC BAA-335 / MC58).